The following is a 307-amino-acid chain: Oxygen-dependent coproporphyrinogen-III oxidase (307 aa).

Substrate is bound at residue serine 99. Positions 103 and 113 each coordinate a divalent metal cation. Histidine 113 serves as the catalytic Proton donor. 115 to 117 (NVR) is a substrate binding site. The a divalent metal cation site is built by histidine 152 and histidine 182. Residues 247–282 (YVEFNLVFDRGTLFGLQSGGRTESILMSMPPVVNWR) are important for dimerization. 265 to 267 (GGR) is a binding site for substrate.

The protein belongs to the aerobic coproporphyrinogen-III oxidase family. Homodimer. A divalent metal cation serves as cofactor.

Its subcellular location is the cytoplasm. The enzyme catalyses coproporphyrinogen III + O2 + 2 H(+) = protoporphyrinogen IX + 2 CO2 + 2 H2O. Its pathway is porphyrin-containing compound metabolism; protoporphyrin-IX biosynthesis; protoporphyrinogen-IX from coproporphyrinogen-III (O2 route): step 1/1. Functionally, involved in the heme biosynthesis. Catalyzes the aerobic oxidative decarboxylation of propionate groups of rings A and B of coproporphyrinogen-III to yield the vinyl groups in protoporphyrinogen-IX. This is Oxygen-dependent coproporphyrinogen-III oxidase from Paraburkholderia xenovorans (strain LB400).